The following is a 376-amino-acid chain: MTLAPLDASKVKITTTQHASKPKPNSELVFGKSFTDHMLTAEWTAEKGWGTPEIKPYQNLSLDPSAVVFHYAFELFEGMKAYRTVDNKITMFRPDMNMKRMNKSAQRICLPTFDPEELITLIGKLIQQDKCLVPEGKGYSLYIRPTLIGTTAGLGVSTPDRALLYVICCPVGPYYKTGFKAVRLEATDYATRAWPGGCGDKKLGANYAPCVLPQLQAASRGYQQNLWLFGPNNNITEVGTMNAFFVFKDSKTGKKELVTAPLDGTILEGVTRDSILNLAKERLEPSEWTISERYFTIGEVTERSKNGELLEAFGSGTAAIVSPIKEIGWKGEQINIPLLPGEQTGPLAKEVAQWINGIQYGETEHGNWSRVVTDLN.

The residue at position 202 (Lys202) is an N6-(pyridoxal phosphate)lysine.

This sequence belongs to the class-IV pyridoxal-phosphate-dependent aminotransferase family. The cofactor is pyridoxal 5'-phosphate.

It localises to the cytoplasm. The catalysed reaction is L-leucine + 2-oxoglutarate = 4-methyl-2-oxopentanoate + L-glutamate. The enzyme catalyses L-isoleucine + 2-oxoglutarate = (S)-3-methyl-2-oxopentanoate + L-glutamate. It catalyses the reaction L-valine + 2-oxoglutarate = 3-methyl-2-oxobutanoate + L-glutamate. It carries out the reaction a 2-oxocarboxylate + L-methionine = 4-methylsulfanyl-2-oxobutanoate + an L-alpha-amino acid. The protein operates within amino-acid biosynthesis; L-isoleucine biosynthesis; L-isoleucine from 2-oxobutanoate: step 4/4. It participates in amino-acid biosynthesis; L-leucine biosynthesis; L-leucine from 3-methyl-2-oxobutanoate: step 4/4. It functions in the pathway amino-acid biosynthesis; L-valine biosynthesis; L-valine from pyruvate: step 4/4. Its pathway is amino-acid biosynthesis; L-methionine biosynthesis via salvage pathway; L-methionine from S-methyl-5-thio-alpha-D-ribose 1-phosphate: step 6/6. Its function is as follows. Cytoplasmic isozyme of branched-chain-amino-acid aminotransferase, which catalyzes the first reaction in the catabolism of the essential branched chain amino acids (BCAAs) leucine, isoleucine, and valine. Catalyzes the formation of methionine from 2-keto-4-methylthiobutyrate (KMTB) in the methionine salvage pathway primarily using BCAAs (leucine, isoleucine, and valine) as well as lysine and proline as the amino donors. Involved in cell cycle regulation. In Saccharomyces cerevisiae (strain ATCC 204508 / S288c) (Baker's yeast), this protein is Branched-chain-amino-acid aminotransferase, cytosolic.